A 760-amino-acid chain; its full sequence is Cyclin-D-binding Myb-like transcription factor 1 (760 aa).

An interaction with CCND2 region spans residues 1–237 (MSTVEEDSDT…TPEEIEKLKE (237 aa)). The segment at 24 to 63 (DTDGNLILHCPQNDPDEIDSEDSTEPPHKRLCLSSEDDQS) is disordered. Positions 37 to 47 (DPDEIDSEDST) are enriched in acidic residues. The tract at residues 87-170 (VTMTATTEVA…IDILMNNIER (84 aa)) is required for transcriptional activation. Residues 87–458 (VTMTATTEVA…DNTAISPSPM (372 aa)) are required for DNA-binding. An interaction with CCND1, CCND2 and CCND3 region spans residues 176 to 690 (GIKDATEIIF…PTIVHQVHQT (515 aa)). The region spanning 225-263 (GKYTPEEIEKLKELRIKHGNDWATIGAALGRSASSVKDR) is the Myb-like 1 domain. Positions 268-333 (KDTCNTGKWT…KWLNYLNWKQ (66 aa)) constitute an HTH myb-type domain. Positions 306-329 (WAAVAERVGTRSEKQCRSKWLNYL) form a DNA-binding region, H-T-H motif. The Myb-like 2 domain occupies 339-388 (WTKEDEINLILRIAELDVADENDINWDLLAEGWSSVRSPQWLRSKWWTIK). The segment at 459–760 (AALQIPVQIT…KDVEDLVNCH (302 aa)) is required for transcriptional activation. 2 disordered regions span residues 593-614 (DSDL…DTFP) and 738-760 (IGSS…VNCH).

It belongs to the DMTF1 family. In terms of assembly, interacts with the D-type cyclins CCND1, CCND2 and CCND3. Interaction with D-type cyclins may modulate transcriptional activation by this protein. Post-translationally, phosphorylated by the cyclin-D2/CDK4, cyclin-D3/CDK4 and cyclin-D2/CDK6 complexes and to a lesser extent by the cyclin-D1/CDK4 complex.

It is found in the nucleus. Functionally, transcriptional activator which activates the CDKN2A/ARF locus in response to Ras-Raf signaling, thereby promoting p53/TP53-dependent growth arrest. Binds to the consensus sequence 5'-CCCG[GT]ATGT-3'. The polypeptide is Cyclin-D-binding Myb-like transcription factor 1 (Dmtf1) (Rattus norvegicus (Rat)).